Reading from the N-terminus, the 238-residue chain is Large ribosomal subunit protein uL2 (238 aa).

The tract at residues His-200–Lys-238 is disordered. Residues Gln-206 to Arg-216 are compositionally biased toward polar residues. The segment covering Lys-223 to Lys-238 has biased composition (basic residues).

Belongs to the universal ribosomal protein uL2 family. Part of the 50S ribosomal subunit. Forms a bridge to the 30S subunit in the 70S ribosome.

Its function is as follows. One of the primary rRNA binding proteins. Required for association of the 30S and 50S subunits to form the 70S ribosome, for tRNA binding and peptide bond formation. It has been suggested to have peptidyltransferase activity; this is somewhat controversial. Makes several contacts with the 16S rRNA in the 70S ribosome. This chain is Large ribosomal subunit protein uL2, found in Saccharolobus islandicus (strain L.S.2.15 / Lassen #1) (Sulfolobus islandicus).